The chain runs to 371 residues: Deoxyuridine 5'-triphosphate nucleotidohydrolase (371 aa).

Substrate is bound by residues 260 to 262 and 366 to 367; these read RSS and FG. The tract at residues 350 to 371 is disordered; that stretch reads NEFDAEAPPSERGTGGFGSTGI. Residues 362–371 are compositionally biased toward gly residues; it reads GTGGFGSTGI.

The protein belongs to the dUTPase family. It depends on Mg(2+) as a cofactor.

The catalysed reaction is dUTP + H2O = dUMP + diphosphate + H(+). Its function is as follows. Involved in nucleotide metabolism: produces dUMP, the immediate precursor of thymidine nucleotides and decreases the intracellular concentration of dUTP to avoid uracil incorporation into viral DNA. The polypeptide is Deoxyuridine 5'-triphosphate nucleotidohydrolase (Homo sapiens (Human)).